A 261-amino-acid polypeptide reads, in one-letter code: Thiamine thiazole synthase (261 aa).

NAD(+) contacts are provided by residues Ala-33, 52–53 (ER), Gly-60, Val-124, and 152–154 (HVD). Fe cation is bound by residues Asp-154 and His-169. Residue Met-219 participates in NAD(+) binding. Glycine is bound at residue Arg-229.

This sequence belongs to the THI4 family. As to quaternary structure, homooctamer; tetramer of dimers. The cofactor is Fe(2+).

It catalyses the reaction hydrogen sulfide + glycine + NAD(+) = ADP-5-ethyl-4-methylthiazole-2-carboxylate + nicotinamide + 3 H2O + H(+). The protein operates within cofactor biosynthesis; thiamine diphosphate biosynthesis. In terms of biological role, involved in the biosynthesis of the thiazole moiety of thiamine. Catalyzes the conversion of NAD and glycine to adenosine diphosphate 5-(2-hydroxyethyl)-4-methylthiazole-2-carboxylate (ADT), an adenylated thiazole intermediate, using free sulfide as a source of sulfur. The sequence is that of Thiamine thiazole synthase from Pyrobaculum islandicum (strain DSM 4184 / JCM 9189 / GEO3).